A 640-amino-acid polypeptide reads, in one-letter code: Threonine--tRNA ligase (640 aa).

Positions 224 to 525 are catalytic; the sequence is DHRKLGKELD…LTEHYAGAFP (302 aa). Positions 323, 374, and 502 each coordinate Zn(2+).

Belongs to the class-II aminoacyl-tRNA synthetase family. As to quaternary structure, homodimer. It depends on Zn(2+) as a cofactor.

The protein localises to the cytoplasm. It carries out the reaction tRNA(Thr) + L-threonine + ATP = L-threonyl-tRNA(Thr) + AMP + diphosphate + H(+). Catalyzes the attachment of threonine to tRNA(Thr) in a two-step reaction: L-threonine is first activated by ATP to form Thr-AMP and then transferred to the acceptor end of tRNA(Thr). Also edits incorrectly charged L-seryl-tRNA(Thr). This chain is Threonine--tRNA ligase, found in Tropheryma whipplei (strain Twist) (Whipple's bacillus).